A 281-amino-acid chain; its full sequence is Hydroxyethylthiazole kinase (281 aa).

ATP is bound by residues R124 and S169.

This sequence belongs to the Thz kinase family. Mg(2+) is required as a cofactor.

The enzyme catalyses 5-(2-hydroxyethyl)-4-methylthiazole + ATP = 4-methyl-5-(2-phosphooxyethyl)-thiazole + ADP + H(+). The protein operates within cofactor biosynthesis; thiamine diphosphate biosynthesis; 4-methyl-5-(2-phosphoethyl)-thiazole from 5-(2-hydroxyethyl)-4-methylthiazole: step 1/1. Its function is as follows. Catalyzes the phosphorylation of the hydroxyl group of 4-methyl-5-beta-hydroxyethylthiazole (THZ). This is Hydroxyethylthiazole kinase from Rhodococcus erythropolis (strain PR4 / NBRC 100887).